Reading from the N-terminus, the 420-residue chain is Na(+)/H(+) antiporter NhaA (420 aa).

11 consecutive transmembrane segments (helical) span residues 4–24 (VWNF…IALI), 70–90 (DLLM…AVIL), 104–124 (LVAT…IAYF), 132–152 (AVAN…YLVG), 165–185 (FLLL…AIFY), 192–212 (PAWL…ANWL), 233–250 (LSFW…YGFM), 299–319 (VEII…SAMG), 323–343 (WLVL…FGWL), 361–381 (LVVI…VASV), and 395–415 (GALF…LTQV).

Belongs to the NhaA Na(+)/H(+) (TC 2.A.33) antiporter family.

It is found in the cell inner membrane. The enzyme catalyses Na(+)(in) + 2 H(+)(out) = Na(+)(out) + 2 H(+)(in). In terms of biological role, na(+)/H(+) antiporter that extrudes sodium in exchange for external protons. The polypeptide is Na(+)/H(+) antiporter NhaA (Jannaschia sp. (strain CCS1)).